The sequence spans 197 residues: Recombination protein RecR (197 aa).

The C4-type zinc finger occupies 57 to 72; sequence CSICFAITEDDPCAIC. The Toprim domain maps to 79–174; it reads GTICVVENSQ…RISRLAHGIP (96 aa).

This sequence belongs to the RecR family.

Functionally, may play a role in DNA repair. It seems to be involved in an RecBC-independent recombinational process of DNA repair. It may act with RecF and RecO. This chain is Recombination protein RecR, found in Pelobacter propionicus (strain DSM 2379 / NBRC 103807 / OttBd1).